Here is a 180-residue protein sequence, read N- to C-terminus: MKQPARTSQVKKPAARVKRKTREEINQEARDRKREKKHSGHASGSRANPATVSQKGDKSQSVKDPRIGSKKAIALGTDAPVRQPANPVKAAKPAVEKKPRLTPEEELAKLENDERLDALLDRLENGEALSAEDQAWLDQSLDRIDVLMEQLGIALDDDAEDEKAEEDMYRLLKGSHRTPE.

A compositionally biased stretch (polar residues) spans 1-10 (MKQPARTSQV). Disordered regions lie at residues 1–102 (MKQP…PRLT) and 158–180 (DAED…RTPE). Residues 21–32 (TREEINQEARDR) are compositionally biased toward basic and acidic residues. Residues 45–54 (SRANPATVSQ) show a composition bias toward polar residues. The span at 55–67 (KGDKSQSVKDPRI) shows a compositional bias: basic and acidic residues. Residues 84-93 (PANPVKAAKP) show a composition bias toward low complexity.

The protein belongs to the YihI family. As to quaternary structure, interacts with Der.

A GTPase-activating protein (GAP) that modifies Der/EngA GTPase function. May play a role in ribosome biogenesis. The sequence is that of Der GTPase-activating protein YihI from Erwinia tasmaniensis (strain DSM 17950 / CFBP 7177 / CIP 109463 / NCPPB 4357 / Et1/99).